The primary structure comprises 450 residues: Benzene 1,2-dioxygenase subunit alpha (450 aa).

The Rieske domain maps to 54–163 (WLLLGHETQI…VETYKGLIFA (110 aa)). 4 residues coordinate [2Fe-2S] cluster: Cys-96, His-98, Cys-116, and His-119. His-222 and His-228 together coordinate Fe cation.

It belongs to the bacterial ring-hydroxylating dioxygenase alpha subunit family. This dioxygenase system consists of four proteins: the two subunits of the hydroxylase component (BnzA and BnzB), a ferredoxin (BnzC) and a ferredoxin reductase (BnzD). [2Fe-2S] cluster serves as cofactor. The cofactor is Fe cation.

The catalysed reaction is benzene + NADH + O2 + H(+) = cis-1,2-dihydrobenzene-1,2-diol + NAD(+). It catalyses the reaction toluene + NADH + O2 + H(+) = (1S,2R)-3-methylcyclohexa-3,5-diene-1,2-diol + NAD(+). The protein operates within aromatic compound metabolism; benzene degradation; catechol from benzene: step 1/2. Its pathway is xenobiotic degradation; toluene degradation. It participates in xenobiotic degradation; xylene degradation. Its function is as follows. Catalyzes both the oxidation of benzene and toluene. In Pseudomonas putida (strain ATCC 700007 / DSM 6899 / JCM 31910 / BCRC 17059 / LMG 24140 / F1), this protein is Benzene 1,2-dioxygenase subunit alpha (bnzA).